The chain runs to 207 residues: Glutathione S-transferase P (207 aa).

Residues 1 to 78 (PPYTITYFPV…HLGRSFGLYG (78 aa)) form the GST N-terminal domain. Phosphotyrosine; by EGFR is present on Tyr3. Residues Tyr7, Arg13, Trp38, Lys42, and 49 to 50 (QL) each bind glutathione. Position 59 is a phosphothreonine (Thr59). Glutathione is bound at residue 62–63 (QS). Residues 80 to 201 (DQKEAALVDM…ASPEHVNRPI (122 aa)) enclose the GST C-terminal domain. Lys100 and Lys113 each carry N6-succinyllysine. Lys125 carries the post-translational modification N6-acetyllysine.

The protein belongs to the GST superfamily. Pi family. As to quaternary structure, homodimer. Interacts with CDK5.

The protein resides in the cytoplasm. It localises to the mitochondrion. The protein localises to the nucleus. The enzyme catalyses RX + glutathione = an S-substituted glutathione + a halide anion + H(+). It catalyses the reaction prostaglandin J2 + glutathione = prostaglandin J2-S-(R)-glutathione. The catalysed reaction is prostaglandin J2 + glutathione = prostaglandin J2-S-(S)-glutathione. It carries out the reaction prostaglandin A2 + glutathione = prostaglandin A2-S-(S)-glutathione. The enzyme catalyses 11(S)-hydroxy-14(S),15(S)-epoxy-(5Z,8Z,12E)-eicosatrienoate + glutathione = (11S,15S)-dihydroxy-14(R)-S-glutathionyl-(5Z,8Z,12E)-eicosatrienoate. Its function is as follows. Conjugation of reduced glutathione to a wide number of exogenous and endogenous hydrophobic electrophiles. Involved in the formation of glutathione conjugates of both prostaglandin A2 (PGA2) and prostaglandin J2 (PGJ2). Participates in the formation of novel hepoxilin regioisomers. Negatively regulates CDK5 activity via p25/p35 translocation to prevent neurodegeneration. In Sus scrofa (Pig), this protein is Glutathione S-transferase P (GSTP1).